Consider the following 380-residue polypeptide: 4-hydroxy-tetrahydrodipicolinate synthase, chloroplastic (380 aa).

Positions 1–44 (MISPTNLLPARKITPVSNGGAATASPSSPSVAARPRRLPSGLQS) are disordered. The transit peptide at 1 to 54 (MISPTNLLPARKITPVSNGGAATASPSSPSVAARPRRLPSGLQSVTGRGKVSLA) directs the protein to the chloroplast. Over residues 21–33 (AATASPSSPSVAA) the composition is skewed to low complexity. T123 contacts pyruvate. The Proton donor/acceptor role is filled by Y209. K237 functions as the Schiff-base intermediate with substrate in the catalytic mechanism. I276 is a pyruvate binding site.

This sequence belongs to the DapA family. As to quaternary structure, tetramer of modified subunits derived from two genes in different combinations.

It localises to the plastid. It is found in the chloroplast. It catalyses the reaction L-aspartate 4-semialdehyde + pyruvate = (2S,4S)-4-hydroxy-2,3,4,5-tetrahydrodipicolinate + H2O + H(+). It participates in amino-acid biosynthesis; L-lysine biosynthesis via DAP pathway; (S)-tetrahydrodipicolinate from L-aspartate: step 3/4. With respect to regulation, sensitive to lysine inhibition. This inhibition increase in an allosteric manner with increasing concentration of the inhibitor. Catalyzes the condensation of (S)-aspartate-beta-semialdehyde [(S)-ASA] and pyruvate to 4-hydroxy-tetrahydrodipicolinate (HTPA). This is 4-hydroxy-tetrahydrodipicolinate synthase, chloroplastic from Zea mays (Maize).